Here is a 229-residue protein sequence, read N- to C-terminus: Large ribosomal subunit protein uL1 (229 aa).

Belongs to the universal ribosomal protein uL1 family. In terms of assembly, part of the 50S ribosomal subunit.

Binds directly to 23S rRNA. The L1 stalk is quite mobile in the ribosome, and is involved in E site tRNA release. In terms of biological role, protein L1 is also a translational repressor protein, it controls the translation of the L11 operon by binding to its mRNA. The chain is Large ribosomal subunit protein uL1 from Streptococcus equi subsp. zooepidemicus (strain MGCS10565).